Reading from the N-terminus, the 551-residue chain is L-lactate permease (551 aa).

The next 12 membrane-spanning stretches (helical) occupy residues 13–33 (NIWL…FALI), 37–57 (LKGY…ALLF), 69–89 (VVYG…AAVF), 131–151 (GAAG…GLGF), 159–179 (LCLI…PILV), 194–214 (MVGR…MAIM), 244–264 (FIGP…CLTL), 306–326 (FLFL…ALFA), 366–386 (FDWF…SIVW), 405–425 (LALP…SNYS), 438–458 (TGSA…FLTG), and 530–550 (IFTC…TWMI).

The protein belongs to the lactate permease family.

Its subcellular location is the cell inner membrane. It carries out the reaction (S)-lactate(in) + H(+)(in) = (S)-lactate(out) + H(+)(out). The catalysed reaction is (R)-lactate(in) + H(+)(in) = (R)-lactate(out) + H(+)(out). The enzyme catalyses glycolate(in) + H(+)(in) = glycolate(out) + H(+)(out). Its function is as follows. Uptake of L-lactate across the membrane. Can also transport D-lactate and glycolate. Seems to be driven by a proton motive force. The polypeptide is L-lactate permease (lldP) (Salmonella typhimurium (strain LT2 / SGSC1412 / ATCC 700720)).